A 389-amino-acid polypeptide reads, in one-letter code: Nicotinamide-nucleotide adenylyltransferase (389 aa).

The Nuclear localization signal motif lies at 380-383 (KKQK).

It belongs to the eukaryotic NMN adenylyltransferase family. As to expression, abundantly expressed in neuronal and muscle cells. Present at relatively low levels at the neuromuscular junction. Expressed in the eye; present in photoreceptor cells and various neurons in the lamina cortex and medulla cortex and at low levels in the lamina.

Its subcellular location is the nucleus. It is found in the cytoplasm. The protein resides in the presynaptic active zone. The enzyme catalyses beta-nicotinamide D-ribonucleotide + ATP + H(+) = diphosphate + NAD(+). It carries out the reaction nicotinate beta-D-ribonucleotide + ATP + H(+) = deamido-NAD(+) + diphosphate. It participates in cofactor biosynthesis; NAD(+) biosynthesis; NAD(+) from nicotinamide D-ribonucleotide: step 1/1. Its pathway is cofactor biosynthesis; NAD(+) biosynthesis; deamido-NAD(+) from nicotinate D-ribonucleotide: step 1/1. Functionally, catalyzes the formation of NAD(+) from nicotinamide mononucleotide (NMN) and ATP. Essential for viability. Stress-response chaperone protein that prevents toxic aggregation of proteins and promotes proteasome-mediated degradation of misfolded proteins; this is independent of its NAD(+) synthesis activity. Neuroprotective in response to toxic protein aggregation, for example by overexpressed Atx-1/ataxin-1. Required for maintenance and integrity of mature neurons, protecting them from neuronal activity-induced neurodegeneration. Required for the maintenance of axonal and dendritic integrity in both central and peripheral neurons. Chaperone function and neuroprotective roles are largely independent of NAD(+) synthesis activity. Catalyzes the formation of NAD(+) from nicotinamide mononucleotide (NMN) and ATP. Has, or stimulates, chaperone holdase activity but not refoldase activity. Does not have neuroprotective properties and may stimulate apoptosis and neurodegeneration in response to toxic protein aggregates. Its function is as follows. Catalyzes the formation of NAD(+) from nicotinamide mononucleotide (NMN) and ATP. Has, or stimulates, chaperone holdase and refoldase activity. Neuroprotective and reduces the toxic load of protein aggregates, preventing apoptosis and neurodegeneration. Promotes clearance of nuclear misfolded protein aggregates. This Drosophila melanogaster (Fruit fly) protein is Nicotinamide-nucleotide adenylyltransferase.